The primary structure comprises 105 residues: Hydrogen cyanide synthase subunit HcnA (105 aa).

A 2Fe-2S ferredoxin-type domain is found at 16 to 97; sequence ADMTISLNGQ…GMQVQTLSNR (82 aa). Cysteine 60, cysteine 65, cysteine 68, and cysteine 81 together coordinate [2Fe-2S] cluster.

Heterotrimer of HcnA, HcnB and HcnC.

It localises to the cell membrane. The enzyme catalyses glycine + 2 A = hydrogen cyanide + 2 AH2 + CO2. A three-component membrane-bound flavoenzyme that catalyzes the formation of hydrogen cyanide, a secondary metabolite, by transfer of electrons to a cyanide-resistant branch of the aerobic respiratory chain. Contributes to suppression of black root rot of tobacco. The protein is Hydrogen cyanide synthase subunit HcnA of Pseudomonas protegens (strain DSM 19095 / LMG 27888 / CFBP 6595 / CHA0).